The following is a 137-amino-acid chain: Small ribosomal subunit protein uS12 (137 aa).

Residues 1 to 57 (MPTINQLVRKPRQSKIKKSDSPALNKGFNSKKKKFTDLNSPQKRGVCTRVGTMTPRK) are disordered. Aspartate 102 bears the 3-methylthioaspartic acid mark. Residues 118–137 (SGVDGRRQGRSLYGTKKPKN) are disordered.

This sequence belongs to the universal ribosomal protein uS12 family. Part of the 30S ribosomal subunit. Contacts proteins S8 and S17. May interact with IF1 in the 30S initiation complex.

Its function is as follows. With S4 and S5 plays an important role in translational accuracy. Interacts with and stabilizes bases of the 16S rRNA that are involved in tRNA selection in the A site and with the mRNA backbone. Located at the interface of the 30S and 50S subunits, it traverses the body of the 30S subunit contacting proteins on the other side and probably holding the rRNA structure together. The combined cluster of proteins S8, S12 and S17 appears to hold together the shoulder and platform of the 30S subunit. This chain is Small ribosomal subunit protein uS12, found in Staphylococcus aureus (strain COL).